We begin with the raw amino-acid sequence, 263 residues long: Acyl-[acyl-carrier-protein]--UDP-N-acetylglucosamine O-acyltransferase (263 aa).

It belongs to the transferase hexapeptide repeat family. LpxA subfamily. In terms of assembly, homotrimer.

It is found in the cytoplasm. The enzyme catalyses a (3R)-hydroxyacyl-[ACP] + UDP-N-acetyl-alpha-D-glucosamine = a UDP-3-O-[(3R)-3-hydroxyacyl]-N-acetyl-alpha-D-glucosamine + holo-[ACP]. It participates in glycolipid biosynthesis; lipid IV(A) biosynthesis; lipid IV(A) from (3R)-3-hydroxytetradecanoyl-[acyl-carrier-protein] and UDP-N-acetyl-alpha-D-glucosamine: step 1/6. Involved in the biosynthesis of lipid A, a phosphorylated glycolipid that anchors the lipopolysaccharide to the outer membrane of the cell. The protein is Acyl-[acyl-carrier-protein]--UDP-N-acetylglucosamine O-acyltransferase of Campylobacter jejuni (strain RM1221).